The sequence spans 412 residues: 1-deoxy-D-xylulose 5-phosphate reductoisomerase (412 aa).

Residues Thr5, Gly6, Ser7, Ile8, Gly31, Asn33, and Asn125 each contribute to the NADPH site. 1-deoxy-D-xylulose 5-phosphate is bound at residue Lys126. Glu127 contacts NADPH. Asp151 serves as a coordination point for Mn(2+). 1-deoxy-D-xylulose 5-phosphate-binding residues include Ser152, Glu153, Ser189, and His212. A Mn(2+)-binding site is contributed by Glu153. Gly218 contacts NADPH. 1-deoxy-D-xylulose 5-phosphate-binding residues include Ser225, Asn230, Lys231, and Glu234. Residue Glu234 coordinates Mn(2+).

This sequence belongs to the DXR family. Mg(2+) is required as a cofactor. Requires Mn(2+) as cofactor.

The enzyme catalyses 2-C-methyl-D-erythritol 4-phosphate + NADP(+) = 1-deoxy-D-xylulose 5-phosphate + NADPH + H(+). Its pathway is isoprenoid biosynthesis; isopentenyl diphosphate biosynthesis via DXP pathway; isopentenyl diphosphate from 1-deoxy-D-xylulose 5-phosphate: step 1/6. Functionally, catalyzes the NADPH-dependent rearrangement and reduction of 1-deoxy-D-xylulose-5-phosphate (DXP) to 2-C-methyl-D-erythritol 4-phosphate (MEP). The chain is 1-deoxy-D-xylulose 5-phosphate reductoisomerase from Prochlorococcus marinus (strain MIT 9313).